Consider the following 293-residue polypeptide: Glutamyl-Q tRNA(Asp) synthetase (293 aa).

L-glutamate-binding positions include 26–30 and D62; that span reads RFAPS. Positions 29–39 match the 'HIGH' region motif; it reads PSPTGLLHLGN. Zn(2+) contacts are provided by C118, C120, Y131, and C135. L-glutamate contacts are provided by Y178 and R196. The 'KMSKS' region motif lies at 234–238; that stretch reads KLSKR. K237 lines the ATP pocket.

The protein belongs to the class-I aminoacyl-tRNA synthetase family. GluQ subfamily. Requires Zn(2+) as cofactor.

Functionally, catalyzes the tRNA-independent activation of glutamate in presence of ATP and the subsequent transfer of glutamate onto a tRNA(Asp). Glutamate is transferred on the 2-amino-5-(4,5-dihydroxy-2-cyclopenten-1-yl) moiety of the queuosine in the wobble position of the QUC anticodon. The chain is Glutamyl-Q tRNA(Asp) synthetase from Synechococcus sp. (strain CC9605).